We begin with the raw amino-acid sequence, 635 residues long: Threonine--tRNA ligase (635 aa).

One can recognise a TGS domain in the interval 1 to 61 (MITVRLPDGS…EKDSDLAIIT (61 aa)). A catalytic region spans residues 242 to 533 (DHRKLGKQLD…LIEHYAGALP (292 aa)). Zn(2+) is bound by residues Cys-333, His-384, and His-510.

The protein belongs to the class-II aminoacyl-tRNA synthetase family. As to quaternary structure, homodimer. Zn(2+) is required as a cofactor.

Its subcellular location is the cytoplasm. The catalysed reaction is tRNA(Thr) + L-threonine + ATP = L-threonyl-tRNA(Thr) + AMP + diphosphate + H(+). Catalyzes the attachment of threonine to tRNA(Thr) in a two-step reaction: L-threonine is first activated by ATP to form Thr-AMP and then transferred to the acceptor end of tRNA(Thr). Also edits incorrectly charged L-seryl-tRNA(Thr). This is Threonine--tRNA ligase from Janthinobacterium sp. (strain Marseille) (Minibacterium massiliensis).